A 211-amino-acid polypeptide reads, in one-letter code: Redox-sensing transcriptional repressor Rex (211 aa).

The segment at residues 17 to 56 is a DNA-binding region (H-T-H motif); sequence LYYRLVSILKGKGIDRVNSKTISEALQIDSATIRRDFSYF. 91 to 96 is an NAD(+) binding site; the sequence is GIGNLG.

It belongs to the transcriptional regulatory Rex family. As to quaternary structure, homodimer.

Its subcellular location is the cytoplasm. In terms of biological role, modulates transcription in response to changes in cellular NADH/NAD(+) redox state. The polypeptide is Redox-sensing transcriptional repressor Rex (Staphylococcus epidermidis (strain ATCC 12228 / FDA PCI 1200)).